Reading from the N-terminus, the 310-residue chain is Probable manganese-dependent inorganic pyrophosphatase (310 aa).

Mn(2+) contacts are provided by His-9, Asp-13, Asp-15, Asp-75, His-97, and Asp-149.

It belongs to the PPase class C family. Requires Mn(2+) as cofactor.

The protein localises to the cytoplasm. The catalysed reaction is diphosphate + H2O = 2 phosphate + H(+). The protein is Probable manganese-dependent inorganic pyrophosphatase of Bacillus cytotoxicus (strain DSM 22905 / CIP 110041 / 391-98 / NVH 391-98).